The sequence spans 700 residues: MKTRQRKRLFVSAALAVSLTMTVPMPASVNAAASDVTFTINTQSERAAISPNIYGTNQDLSGTENWSSRRLGGNRLTGYNWENNASSAGRDWLHYSDDFLCGNGGVPDTDCDKPGAVVTAFHDKSLENGAYSIVTLQMAGYVSRDKNGPVDESETAPSPRWDKVEFAKNAPFSLQPHLNDGQVYMDEEVNFLVNRYGNASTSTGIKAYSLDNEPALWSETHPRIHPEQLQAAELVAKSIDLSKAVKNVDPHAEIFGPALYGFGAYLSLQDAPGWPSLQGNYSWFIDYYLDQMKNAHTQNGKRLLDVLDVHWYPEAQGGGQRIVFGGAGNIDTQKARVQAPRSLWDPAYQEDSWIGTWFSSYLPLIPKLQSSIQTYYPGTKLAITESSYGGDNHISGGIATADALGIFGKYGVYAANYWQTEDNTDYTSAAYKLYRNYDGNKSGFGSIKVDAATSDTENSSVYASVTDEENSELHLIVLNKNFDDPINATFQLSGDKTYTSGRVWGFDQTGSDITEQAAITNINNNQFTYTLPPLSAYHIVLKADSTEPVNSDLVVQYKDGDRNNATDNQIKPHFNIQNKGTSPVDLSSLTLRYYFTKDSSAAMNGWIDWAKLGGSNIQISFGNHNGADSDTYAELGFSSGAGSIAEGGQSGEIQLRMSKADWSNFNEANDYSFDGAKTAYIDWDRVTLYQDGQLVWGIEP.

Positions 1 to 33 are cleaved as a signal peptide; it reads MKTRQRKRLFVSAALAVSLTMTVPMPASVNAAA. The active site involves glutamate 213. The CBM3 domain maps to 550–700; sequence NSDLVVQYKD…DGQLVWGIEP (151 aa).

The protein belongs to the glycosyl hydrolase 44 (cellulase J) family. A short form (EG-A-S) arises from post-translational proteolysis of approximately 150 AA at the C-terminus of EG-A-L.

It catalyses the reaction Endohydrolysis of (1-&gt;4)-beta-D-glucosidic linkages in cellulose, lichenin and cereal beta-D-glucans.. This is Endoglucanase A (celA) from Paenibacillus lautus (Bacillus lautus).